A 223-amino-acid chain; its full sequence is Phosphoribosylformylglycinamidine synthase subunit PurQ (223 aa).

Residues Phe3–Val223 enclose the Glutamine amidotransferase type-1 domain. Cys85 serves as the catalytic Nucleophile. Active-site residues include His193 and Glu195.

In terms of assembly, part of the FGAM synthase complex composed of 1 PurL, 1 PurQ and 2 PurS subunits.

The protein localises to the cytoplasm. It carries out the reaction N(2)-formyl-N(1)-(5-phospho-beta-D-ribosyl)glycinamide + L-glutamine + ATP + H2O = 2-formamido-N(1)-(5-O-phospho-beta-D-ribosyl)acetamidine + L-glutamate + ADP + phosphate + H(+). It catalyses the reaction L-glutamine + H2O = L-glutamate + NH4(+). It participates in purine metabolism; IMP biosynthesis via de novo pathway; 5-amino-1-(5-phospho-D-ribosyl)imidazole from N(2)-formyl-N(1)-(5-phospho-D-ribosyl)glycinamide: step 1/2. Its function is as follows. Part of the phosphoribosylformylglycinamidine synthase complex involved in the purines biosynthetic pathway. Catalyzes the ATP-dependent conversion of formylglycinamide ribonucleotide (FGAR) and glutamine to yield formylglycinamidine ribonucleotide (FGAM) and glutamate. The FGAM synthase complex is composed of three subunits. PurQ produces an ammonia molecule by converting glutamine to glutamate. PurL transfers the ammonia molecule to FGAR to form FGAM in an ATP-dependent manner. PurS interacts with PurQ and PurL and is thought to assist in the transfer of the ammonia molecule from PurQ to PurL. This chain is Phosphoribosylformylglycinamidine synthase subunit PurQ, found in Staphylococcus aureus (strain MRSA252).